We begin with the raw amino-acid sequence, 426 residues long: Pregnancy-specific beta-1-glycoprotein 9 (426 aa).

Positions 1–34 (MGPLPAPSCTQRITWKGLLLTASLLNFWNPPTTA) are cleaved as a signal peptide. The 110-residue stretch at 35–144 (EVTIEAQPPK…IRHFTFTLYL (110 aa)) folds into the Ig-like V-type domain. N-linked (GlcNAc...) asparagine glycosylation is found at Asn104 and Asn111. Residues 127-129 (RGD) carry the Cell attachment site motif. 3 Ig-like C2-type domains span residues 147-234 (PKPY…VTLN), 242-326 (PYIT…PVIL), and 335-410 (PRIY…KSMT). Cystine bridges form between Cys169–Cys217, Cys262–Cys310, and Cys354–Cys394. N-linked (GlcNAc...) asparagine glycosylation is found at Asn199, Asn268, Asn303, and Asn387.

This sequence belongs to the immunoglobulin superfamily. CEA family. In terms of assembly, interacts with latency-associated peptide; leading to TGFB1 activation.

It localises to the secreted. Its function is as follows. Binds to the small latent transforming growth factor-beta complex, consisting of the N-terminal TGFB1 latency-associated peptide (LAP) and the mature form of TGFB1, thereby leading to the activation of TGFB1. The activation of TGFB1 leads to stimulation of naive CD4(+) T-cells to increase FoxP3 expression and to an increase in the number of FoxP3(+) regulatory T-cells. Induces the differentiation of a suppressive CD4(+)LAP(+)FoxP3(-) T-cell subset. Induces the secretion of TGFB1 in macrophages, but not in activated CD4(+) T-cells. May reduce the expression of several pro-inflammatory cytokines and chemokines by CD4(+) T-cells, including IL2 and IL6. The chain is Pregnancy-specific beta-1-glycoprotein 9 (PSG9) from Homo sapiens (Human).